A 333-amino-acid chain; its full sequence is MVREKIRVSTRTLQWKCVESRIDSKRLYYGRFILSPLMKGQADTIGIAMRRVLLGEIEGTCITRVKSEKIPHEYSTIIGIEESVHEILMNLKEIVLRSNLYGTRDASICFKGPGYVTAQDIILPPSVEIVDNTQHIANVTEPVNLCIELKIERNRGYRIKTLKNFQDGSYPIDATFMPVRNVNHSIHSYVNGNEKQEILFLEIWTNGSLTPKEALYEASRNLIDLFIPFLHAEEDNFNLENNQHKVTLPLFTFHDILAKEKLRKKKKEIALKSIFIDQLELPPRIYNCLKRSNIHTLLELLNNSQEDLLKIEHFRVEDVKYILDFLEIEKHFA.

The alpha N-terminal domain (alpha-NTD) stretch occupies residues 1–233; the sequence is MVREKIRVST…DLFIPFLHAE (233 aa). The alpha C-terminal domain (alpha-CTD) stretch occupies residues 267-333; that stretch reads KEIALKSIFI…DFLEIEKHFA (67 aa).

Belongs to the RNA polymerase alpha chain family. In plastids the minimal PEP RNA polymerase catalytic core is composed of four subunits: alpha, beta, beta', and beta''. When a (nuclear-encoded) sigma factor is associated with the core the holoenzyme is formed, which can initiate transcription.

It is found in the plastid. Its subcellular location is the chloroplast. The catalysed reaction is RNA(n) + a ribonucleoside 5'-triphosphate = RNA(n+1) + diphosphate. Its function is as follows. DNA-dependent RNA polymerase catalyzes the transcription of DNA into RNA using the four ribonucleoside triphosphates as substrates. The chain is DNA-directed RNA polymerase subunit alpha from Glycine max (Soybean).